A 231-amino-acid polypeptide reads, in one-letter code: MAKNKRLTAAQATVDRNKAYGLDEAIALVKQVATAKFDETIEISLNLGIDPRHADQMVRGLLSLPNGTGKTLRVGVFARGAKAEEALAAGADVVGAEDLAEKVQAGEIAFDRCIATPDMMALVGRLGKILGPRGLMPNPKLGTVTMDVKGAVTAAKSGQVEYRAEKAGIIHAGIGKASFEGDKLAENIRAFVDAVQKAKPTGAKGTYLRKAALSSTMGPGIRVDVSAFSAG.

The protein belongs to the universal ribosomal protein uL1 family. As to quaternary structure, part of the 50S ribosomal subunit.

In terms of biological role, binds directly to 23S rRNA. The L1 stalk is quite mobile in the ribosome, and is involved in E site tRNA release. Protein L1 is also a translational repressor protein, it controls the translation of the L11 operon by binding to its mRNA. This chain is Large ribosomal subunit protein uL1, found in Gluconacetobacter diazotrophicus (strain ATCC 49037 / DSM 5601 / CCUG 37298 / CIP 103539 / LMG 7603 / PAl5).